The sequence spans 344 residues: N-lysine methyltransferase KMT5A-A (344 aa).

The tract at residues 143–176 is disordered; sequence TSSKHRKPARRKVKRSTKRAAESKSPANRKVTDY. A compositionally biased stretch (basic residues) spans 145 to 160; that stretch reads SKHRKPARRKVKRSTK. Positions 208-329 constitute an SET domain; sequence DGMMVRFIEG…EGEELLYDYG (122 aa). Residues 218 to 220, Y263, and 290 to 291 each bind S-adenosyl-L-methionine; these read KGR and NH.

The protein belongs to the class V-like SAM-binding methyltransferase superfamily. Histone-lysine methyltransferase family. PR/SET subfamily.

It is found in the nucleus. Its subcellular location is the chromosome. The catalysed reaction is L-lysyl(20)-[histone H4] + S-adenosyl-L-methionine = N(6)-methyl-L-lysyl(20)-[histone H4] + S-adenosyl-L-homocysteine + H(+). The enzyme catalyses L-lysyl-[protein] + S-adenosyl-L-methionine = N(6)-methyl-L-lysyl-[protein] + S-adenosyl-L-homocysteine + H(+). Functionally, protein-lysine N-methyltransferase that monomethylates both histones and non-histone proteins. Specifically monomethylates 'Lys-20' of histone H4 (H4K20me1). H4K20me1 is enriched during mitosis and represents a specific tag for epigenetic transcriptional repression. Mainly functions in euchromatin regions, thereby playing a central role in the silencing of euchromatic genes. Required for cell proliferation, probably by contributing to the maintenance of proper higher-order structure of DNA during mitosis. Involved in chromosome condensation and proper cytokinesis. In Danio rerio (Zebrafish), this protein is N-lysine methyltransferase KMT5A-A.